Reading from the N-terminus, the 134-residue chain is Global transcriptional regulator Spx (134 aa).

Cysteine 10 and cysteine 13 are disulfide-bonded.

This sequence belongs to the ArsC family. Spx subfamily. As to quaternary structure, interacts with the C-terminal domain of the alpha subunit of the RNAP.

It localises to the cytoplasm. Functionally, global transcriptional regulator that plays a key role in stress response and exerts either positive or negative regulation of genes. Acts by interacting with the C-terminal domain of the alpha subunit of the RNA polymerase (RNAP). This interaction can enhance binding of RNAP to the promoter region of target genes and stimulate their transcription, or block interaction of RNAP with activator. This Streptococcus pyogenes serotype M6 (strain ATCC BAA-946 / MGAS10394) protein is Global transcriptional regulator Spx.